A 272-amino-acid chain; its full sequence is Hemin import ATP-binding protein HmuV (272 aa).

Positions 2-255 (LNAEHLHVAR…DLIERCYGFR (254 aa)) constitute an ABC transporter domain. 34 to 41 (GRNGAGKS) provides a ligand contact to ATP.

This sequence belongs to the ABC transporter superfamily. Heme (hemin) importer (TC 3.A.1.14.5) family. The complex is composed of two ATP-binding proteins (HmuV), two transmembrane proteins (HmuU) and a solute-binding protein (HmuT).

It localises to the cell inner membrane. Functionally, part of the ABC transporter complex HmuTUV involved in hemin import. Responsible for energy coupling to the transport system. In Burkholderia thailandensis (strain ATCC 700388 / DSM 13276 / CCUG 48851 / CIP 106301 / E264), this protein is Hemin import ATP-binding protein HmuV.